The following is a 116-amino-acid chain: Promotilin (116 aa).

The signal sequence occupies residues 1-25 (MVSRKAVAVLLMVHVAVMLASQTEA). The tract at residues 39–74 (REKERNKGQKKSLIVQQRSEEVGPLDPVEPPEEEEN) is disordered.

This sequence belongs to the motilin family.

It localises to the secreted. In terms of biological role, plays an important role in the regulation of interdigestive gastrointestinal motility and indirectly causes rhythmic contraction of duodenal and colonic smooth muscle. The protein is Promotilin (MLN) of Felis catus (Cat).